A 319-amino-acid polypeptide reads, in one-letter code: Beta-ketoacyl-[acyl-carrier-protein] synthase III (319 aa).

Active-site residues include Cys-112 and His-246. The interval 247–251 is ACP-binding; it reads QANKR. Residue Asn-276 is part of the active site.

Belongs to the thiolase-like superfamily. FabH family. Homodimer.

It is found in the cytoplasm. It catalyses the reaction malonyl-[ACP] + acetyl-CoA + H(+) = 3-oxobutanoyl-[ACP] + CO2 + CoA. Its pathway is lipid metabolism; fatty acid biosynthesis. Its function is as follows. Catalyzes the condensation reaction of fatty acid synthesis by the addition to an acyl acceptor of two carbons from malonyl-ACP. Catalyzes the first condensation reaction which initiates fatty acid synthesis and may therefore play a role in governing the total rate of fatty acid production. Possesses both acetoacetyl-ACP synthase and acetyl transacylase activities. Its substrate specificity determines the biosynthesis of branched-chain and/or straight-chain of fatty acids. This Psychromonas ingrahamii (strain DSM 17664 / CCUG 51855 / 37) protein is Beta-ketoacyl-[acyl-carrier-protein] synthase III.